Reading from the N-terminus, the 558-residue chain is PE cleavage protein A (558 aa).

The region spanning 1–93 (MSFLVVVPEF…SGSYAAAEAT (93 aa)) is the PE domain. Asp-297 is a catalytic residue.

This sequence belongs to the mycobacterial PE family. PGRS subfamily. Undergoes auto-proteolytic processing.

It localises to the secreted. It is found in the cell surface. Aspartic protease that processes the lipase LipY and other PE_PGRS proteins. Can also cleave itself. The polypeptide is PE cleavage protein A (Mycobacterium tuberculosis (strain CDC 1551 / Oshkosh)).